The sequence spans 688 residues: Probable glucan endo-1,3-beta-glucosidase btgC (688 aa).

Disordered regions lie at residues 1–91 (MSGP…NLGP), 126–148 (ANIP…PEPP), and 168–195 (GQLT…IPYQ). Residues 1 to 307 (MSGPNRTYSF…PKPGGGNKKR (307 aa)) are Cytoplasmic-facing. Positions 175-188 (SVSHLSSTNPSQRN) are enriched in polar residues. The chain crosses the membrane as a helical; Signal-anchor for type II membrane protein span at residues 308-328 (GWIVGAILAFIIIGAIVGGAV). Residues 329–688 (GGTIGHRGNE…IPDCGGKTAT (360 aa)) are Extracellular-facing. The tract at residues 334–363 (HRGNEEPSSASSASSSSTQTATEDTSVNGD) is disordered. Residues 341–355 (SSASSASSSSTQTAT) show a composition bias toward low complexity. Residues Asn-408, Asn-431, and Asn-459 are each glycosylated (N-linked (GlcNAc...) asparagine). Glu-491 functions as the Proton donor in the catalytic mechanism. Glu-590 functions as the Nucleophile in the catalytic mechanism. N-linked (GlcNAc...) asparagine glycosylation is found at Asn-609 and Asn-635.

This sequence belongs to the glycosyl hydrolase 17 family.

Its subcellular location is the cell membrane. It carries out the reaction Hydrolysis of (1-&gt;3)-beta-D-glucosidic linkages in (1-&gt;3)-beta-D-glucans.. Functionally, glucanases play a role in cell expansion during growth, in cell-cell fusion during mating, and in spore release during sporulation. This enzyme may be involved in beta-glucan degradation. Active on laminarin and lichenan. The polypeptide is Probable glucan endo-1,3-beta-glucosidase btgC (btgC) (Aspergillus fumigatus (strain ATCC MYA-4609 / CBS 101355 / FGSC A1100 / Af293) (Neosartorya fumigata)).